Reading from the N-terminus, the 421-residue chain is Nuclear speckle RNA-binding protein B (421 aa).

Disordered regions lie at residues 1–64 (MDNR…VNIY), 86–114 (TGQTSTSTTSSSSSSSTSEPKDTSTMVDT), and 197–226 (TDPQEGTPYLIPSGDMHSYLSQDEDRGIPH). Residues 33 to 44 (PLAPPHPQPQPP) are compositionally biased toward pro residues. The span at 89-103 (TSTSTTSSSSSSSTS) shows a compositional bias: low complexity. An RRM domain is found at 323 to 409 (NTLYVEGLPS…KILRLQFFRN (87 aa)).

As to expression, isoform 1: Expressed in root meristems, lateral root primordia, root vascular tissues and cotyledon vascular tissues. Isoform 2: Expressed in root meristems, lateral root primordia and root vascular tissues.

It is found in the nucleus speckle. Functionally, alternative splicing (AS) regulator that binds to specific mRNAs and modulates auxin effects on the transcriptome. Displaced from its targets upon binding to AS competitor long non-coding RNA (ASCO-RNA). The protein is Nuclear speckle RNA-binding protein B of Arabidopsis thaliana (Mouse-ear cress).